The following is a 293-amino-acid chain: Phosphatidylserine decarboxylase proenzyme (293 aa).

Active-site charge relay system; for autoendoproteolytic cleavage activity residues include aspartate 88, histidine 144, and serine 247. Residue serine 247 is the Schiff-base intermediate with substrate; via pyruvic acid; for decarboxylase activity of the active site. Serine 247 is modified (pyruvic acid (Ser); by autocatalysis).

It belongs to the phosphatidylserine decarboxylase family. PSD-B subfamily. Prokaryotic type I sub-subfamily. In terms of assembly, heterodimer of a large membrane-associated beta subunit and a small pyruvoyl-containing alpha subunit. Requires pyruvate as cofactor. Is synthesized initially as an inactive proenzyme. Formation of the active enzyme involves a self-maturation process in which the active site pyruvoyl group is generated from an internal serine residue via an autocatalytic post-translational modification. Two non-identical subunits are generated from the proenzyme in this reaction, and the pyruvate is formed at the N-terminus of the alpha chain, which is derived from the carboxyl end of the proenzyme. The autoendoproteolytic cleavage occurs by a canonical serine protease mechanism, in which the side chain hydroxyl group of the serine supplies its oxygen atom to form the C-terminus of the beta chain, while the remainder of the serine residue undergoes an oxidative deamination to produce ammonia and the pyruvoyl prosthetic group on the alpha chain. During this reaction, the Ser that is part of the protease active site of the proenzyme becomes the pyruvoyl prosthetic group, which constitutes an essential element of the active site of the mature decarboxylase.

Its subcellular location is the cell membrane. The catalysed reaction is a 1,2-diacyl-sn-glycero-3-phospho-L-serine + H(+) = a 1,2-diacyl-sn-glycero-3-phosphoethanolamine + CO2. Its pathway is phospholipid metabolism; phosphatidylethanolamine biosynthesis; phosphatidylethanolamine from CDP-diacylglycerol: step 2/2. Catalyzes the formation of phosphatidylethanolamine (PtdEtn) from phosphatidylserine (PtdSer). The protein is Phosphatidylserine decarboxylase proenzyme of Xylella fastidiosa (strain M23).